A 390-amino-acid chain; its full sequence is Period circadian protein (390 aa).

Disordered regions lie at residues Val27 to Val120, Leu164 to Glu188, Gly247 to Gln266, and Ser327 to Ala356. Gly residues predominate over residues Gly93–Ser114. Gly residues predominate over residues Gly247–Asn256.

Forms a heterodimer with timeless (TIM); the complex then translocates into the nucleus. Phosphorylated with a circadian rhythmicity, probably by the double-time protein (dbt). Phosphorylation could be implicated in the stability of per monomer and in the formation of heterodimer per-tim.

It is found in the nucleus. The protein resides in the cytoplasm. Its subcellular location is the perinuclear region. Essential for biological clock functions. Determines the period length of circadian and ultradian rhythms; an increase in PER dosage leads to shortened circadian rhythms and a decrease leads to lengthened circadian rhythms. Essential for the circadian rhythmicity of locomotor activity, eclosion behavior, and for the rhythmic component of the male courtship song that originates in the thoracic nervous system. The biological cycle depends on the rhythmic formation and nuclear localization of the TIM-PER complex. Light induces the degradation of TIM, which promotes elimination of PER. Nuclear activity of the heterodimer coordinatively regulates PER and TIM transcription through a negative feedback loop. Behaves as a negative element in circadian transcriptional loop. Does not appear to bind DNA, suggesting indirect transcriptional inhibition. The sequence is that of Period circadian protein (per) from Drosophila tropicalis (Fruit fly).